Reading from the N-terminus, the 1020-residue chain is Mastermind-like protein 1 (1020 aa).

Residues 1 to 97 (MVLPTCPMAE…PAPASAPAAA (97 aa)) form a required for interaction with NOTCH proteins region. Phosphoserine is present on serine 45. Positions 67–76 (KAKRAGKHRQ) are enriched in basic residues. Residues 67–191 (KAKRAGKHRQ…TAGKHSLGLD (125 aa)) are disordered. Low complexity predominate over residues 77-99 (PPAAATAPVAAPAPASAPAAARL). The segment covering 100 to 122 (DAADGPEHGRPVAHLHDTVKRSL) has biased composition (basic and acidic residues). Over residues 124-133 (SAASPQNGDQ) the composition is skewed to polar residues. Phosphoserine occurs at positions 127, 310, 321, and 367. 6 disordered regions span residues 335–522 (GASS…YGNT), 575–598 (PFRS…APAA), 663–686 (EKQQ…QSTF), 725–748 (SMGP…RGVA), 794–866 (QNAS…NPFT), and 888–959 (AMPS…RPGL). The segment covering 344–369 (DSPSLGSSQTLFHTTSQPGVDNSSPN) has biased composition (polar residues). Positions 373–383 (ASAQAQSAQRA) are enriched in low complexity. The span at 399 to 410 (ELSSAHQLQQIA) shows a compositional bias: polar residues. A compositionally biased stretch (low complexity) spans 419–435 (LQNPQQAAPAPGPGQLA). Residues 491 to 515 (PSHSNLLSHQSPSNLNQNPVNNQGS) show a composition bias toward polar residues. Residues 588 to 598 (PSSVPVAAPAA) show a composition bias toward low complexity. Residues 794–818 (QNASTSAAYGQNSLGSASLSQQHSK) show a composition bias toward polar residues. An N6-acetyllysine modification is found at lysine 827. Residues 837-864 (MGSQNASWQHQGMPNLSSQTSGNSSVNP) are compositionally biased toward polar residues. A compositionally biased stretch (low complexity) spans 911–920 (SAQQRNSAPA). At serine 1019 the chain carries Phosphoserine.

The protein belongs to the mastermind family. Interacts (via N-terminus) with NOTCH1, NOTCH2, NOTCH3 and NOTCH4 (via ankyrin repeat region). Interacts (via N-terminus) with p53 (via DNA-binding region). Forms a DNA-binding complex with Notch proteins and RBPSUH/RBP-J kappa/CBF1. Also binds CREBBP/CBP and CDK8. Forms a complex with PRAG1, NOTCH1 and MAML1, in a MAML1-dependent manner. At E9.5, strongly expressed in the telencephalon, first branchial arch, forelimb buds and somites. By 10.5 dpc, continuously expressed in brain and spinal cord. Also expressed in first and second branchial arches and limb buds. By 11.5 dpc, expression in CNS is weak but increases in mesodermal tissues. At 14.5 dpc, detected in epithelial cells in trachea, esophagus and proximal and distal tubules of the developing lungs.

It localises to the nucleus speckle. In terms of biological role, acts as a transcriptional coactivator for NOTCH proteins. Has been shown to amplify NOTCH-induced transcription of HES1. Enhances phosphorylation and proteolytic turnover of the NOTCH intracellular domain in the nucleus through interaction with CDK8. Binds to CREBBP/CBP which promotes nucleosome acetylation at NOTCH enhancers and activates transcription. Induces phosphorylation and localization of CREBBP to nuclear foci. Plays a role in hematopoietic development by regulating NOTCH-mediated lymphoid cell fate decisions. The polypeptide is Mastermind-like protein 1 (Mus musculus (Mouse)).